The following is a 153-amino-acid chain: H/ACA ribonucleoprotein complex subunit 2 (153 aa).

Lys-3 participates in a covalent cross-link: Glycyl lysine isopeptide (Lys-Gly) (interchain with G-Cter in SUMO2). Lys-5 participates in a covalent cross-link: Glycyl lysine isopeptide (Lys-Gly) (interchain with G-Cter in SUMO); alternate. Lys-5 participates in a covalent cross-link: Glycyl lysine isopeptide (Lys-Gly) (interchain with G-Cter in SUMO1); alternate. A Glycyl lysine isopeptide (Lys-Gly) (interchain with G-Cter in SUMO2); alternate cross-link involves residue Lys-5.

The protein belongs to the eukaryotic ribosomal protein eL8 family. As to quaternary structure, part of the H/ACA small nucleolar ribonucleoprotein (H/ACA snoRNP) complex, which contains NHP2/NOLA2, GAR1/NOLA1, NOP10/NOLA3, and DKC1/NOLA4, which is presumed to be the catalytic subunit. The complex contains a stable core formed by binding of one or two NOP10-DKC1 heterodimers to NHP2; GAR1 subsequently binds to this core via DKC1. The complex binds a box H/ACA small nucleolar RNA (snoRNA), which may target the specific site of modification within the RNA substrate. During assembly, the complex contains NAF1 instead of GAR1/NOLA1. The complex also interacts with TERC, which contains a 3'-terminal domain related to the box H/ACA snoRNAs. Specific interactions with snoRNAs or TERC are mediated by GAR1 and NHP2. Associates with NOLC1/NOPP140. H/ACA snoRNPs interact with the SMN complex, consisting of SMN1 or SMN2, GEMIN2/SIP1, DDX20/GEMIN3, and GEMIN4. This is mediated by interaction between GAR1 and SMN1 or SMN2. The SMN complex may be required for correct assembly of the H/ACA snoRNP complex. Component of the telomerase holoenzyme complex composed of one molecule of TERT, one molecule of WRAP53/TCAB1, two molecules of H/ACA ribonucleoprotein complex subunits DKC1, NOP10, NHP2 and GAR1, and a telomerase RNA template component (TERC). The telomerase holoenzyme complex is associated with TEP1, SMG6/EST1A and POT1.

The protein resides in the nucleus. The protein localises to the nucleolus. Its subcellular location is the cajal body. Required for ribosome biogenesis and telomere maintenance. Part of the H/ACA small nucleolar ribonucleoprotein (H/ACA snoRNP) complex, which catalyzes pseudouridylation of rRNA. This involves the isomerization of uridine such that the ribose is subsequently attached to C5, instead of the normal N1. Each rRNA can contain up to 100 pseudouridine ('psi') residues, which may serve to stabilize the conformation of rRNAs. May also be required for correct processing or intranuclear trafficking of TERC, the RNA component of the telomerase reverse transcriptase (TERT) holoenzyme. The sequence is that of H/ACA ribonucleoprotein complex subunit 2 (NHP2) from Bos taurus (Bovine).